Reading from the N-terminus, the 252-residue chain is Hydrolase phiM (252 aa).

Ser126 (charge relay system) is an active-site residue.

This sequence belongs to the LovG family.

The protein operates within secondary metabolite biosynthesis. Hydrolase; part of the gene cluster that mediates the biosynthesis of the antihypercholesterolemic agents phomoidrides which are dimeric anhydrides. Within the pathway, phiM releases the C12-fatty acyl chain from phiA. The pathway begins with the highly reducing polyketide synthase tstA that catalyzes the formation of a C12-fatty acyl-ACP, starting from one acetate and 5 malonate units. The hydrolase tstM is involved in the release of the C12-fatty acyl chain from phiA. The alkylcitrate synthase (ACS) tstJ and the alkylcitrate dehydratase (ACDH) tstI then give rise to decarboxylated monomeric anhydrides by coupling the C12-fatty acyl chain with oxalacetic acid. The cyclase tstC is responsible for the dimerization of the monomeric anhydrides which leads to the production of prephomoidride that contains the characteristic bicyclo[4.3.1]deca-1,6-diene system of phomoidrides. Iterative oxidation catalyzed by the alpha-ketoglutarate-dependent dioxygenase tstK produced then phomoidride A. Finally, the methyltransferase tstE converts phomoidride A to phomoidride B via an acetalization reaction. The phosphatidylethanolamine-binding protein tstB and tstN are not essential for dimerization and their functions have still to be determined. In Talaromyces stipitatus (strain ATCC 10500 / CBS 375.48 / QM 6759 / NRRL 1006) (Penicillium stipitatum), this protein is Hydrolase phiM.